Here is a 552-residue protein sequence, read N- to C-terminus: N-acetylglucosamine-6-sulfatase (552 aa).

A signal peptide spans 1–36 (MRLLPLAPGRLRRGSPRHLPSCSPALLLLVLGGCLG). Residues Asp55, Asp56, and Cys91 each contribute to the Ca(2+) site. Catalysis depends on Cys91, which acts as the Nucleophile. Cys91 is subject to 3-oxoalanine (Cys). Asn111, Asn117, Asn183, Asn198, Asn210, Asn279, and Asn317 each carry an N-linked (GlcNAc...) asparagine glycan. Ca(2+)-binding residues include Asp326 and Asn327. Asn362, Asn387, Asn405, Asn422, Asn449, and Asn480 each carry an N-linked (GlcNAc...) asparagine glycan. Ser541 is subject to Phosphoserine.

This sequence belongs to the sulfatase family. Ca(2+) is required as a cofactor. In terms of processing, the form A (78 kDa) is processed by internal peptidase cleavage to a 32 kDa N-terminal species (form B) and a 48 kDa C-terminal species. The conversion to 3-oxoalanine (also known as C-formylglycine, FGly), of a serine or cysteine residue in prokaryotes and of a cysteine residue in eukaryotes, is critical for catalytic activity.

The protein localises to the lysosome. It catalyses the reaction Hydrolysis of the 6-sulfate groups of the N-acetyl-D-glucosamine 6-sulfate units of heparan sulfate and keratan sulfate.. Functionally, hydrolyzes 6-sulfate groups in N-acetyl-d-glucosaminide units of heparin sulfate and keratan sulfate. The chain is N-acetylglucosamine-6-sulfatase (GNS) from Homo sapiens (Human).